The following is a 144-amino-acid chain: MIKPDGVSGNYTEEIKTIVVEAGFNIVKEMLTQLDKETASAFYEEHSSRSFFPHLVTYMTSGPVLVMVLEKRNAVSDWRDLIGPTDAEKAKISHPHSIRALCGKNSQKNCVHGSDSTSSAEREIKFFFKDVVSGDIATQQHDEL.

ATP is bound by residues K3, F51, R79, T85, R99, and N109. H112 functions as the Pros-phosphohistidine intermediate in the catalytic mechanism.

This sequence belongs to the NDK family.

It carries out the reaction a 2'-deoxyribonucleoside 5'-diphosphate + ATP = a 2'-deoxyribonucleoside 5'-triphosphate + ADP. The enzyme catalyses a ribonucleoside 5'-diphosphate + ATP = a ribonucleoside 5'-triphosphate + ADP. Its function is as follows. Involved in the synthesis of nucleoside triphosphates other than ATP. The ATP gamma phosphate is transferred to the NDP beta phosphate via a ping-pong mechanism, using a phosphorylated active-site intermediate. The sequence is that of Probable nucleoside diphosphate kinase 5 from Arabidopsis thaliana (Mouse-ear cress).